Reading from the N-terminus, the 78-residue chain is Exodeoxyribonuclease 7 small subunit (78 aa).

The protein belongs to the XseB family. Heterooligomer composed of large and small subunits.

The protein localises to the cytoplasm. It carries out the reaction Exonucleolytic cleavage in either 5'- to 3'- or 3'- to 5'-direction to yield nucleoside 5'-phosphates.. Its function is as follows. Bidirectionally degrades single-stranded DNA into large acid-insoluble oligonucleotides, which are then degraded further into small acid-soluble oligonucleotides. This Idiomarina loihiensis (strain ATCC BAA-735 / DSM 15497 / L2-TR) protein is Exodeoxyribonuclease 7 small subunit.